A 507-amino-acid chain; its full sequence is Glycerol kinase (507 aa).

Position 15 (T15) interacts with ADP. ATP-binding residues include T15, T16, and S17. T15 contributes to the sn-glycerol 3-phosphate binding site. An ADP-binding site is contributed by R19. The sn-glycerol 3-phosphate site is built by R85, E86, Y137, and D250. R85, E86, Y137, D250, and Q251 together coordinate glycerol. Residues T272, G316, and G418 each coordinate ADP. The ATP site is built by T272, G316, and G418.

It belongs to the FGGY kinase family.

The enzyme catalyses glycerol + ATP = sn-glycerol 3-phosphate + ADP + H(+). The protein operates within polyol metabolism; glycerol degradation via glycerol kinase pathway; sn-glycerol 3-phosphate from glycerol: step 1/1. With respect to regulation, inhibited by fructose 1,6-bisphosphate (FBP). Its function is as follows. Key enzyme in the regulation of glycerol uptake and metabolism. Catalyzes the phosphorylation of glycerol to yield sn-glycerol 3-phosphate. This is Glycerol kinase from Malacoplasma penetrans (strain HF-2) (Mycoplasma penetrans).